We begin with the raw amino-acid sequence, 479 residues long: Ribosomal RNA small subunit methyltransferase F (479 aa).

S-adenosyl-L-methionine is bound by residues 125–131 (AAAPGSK), Glu-149, Asp-176, and Asp-194. Cys-247 acts as the Nucleophile in catalysis.

The protein belongs to the class I-like SAM-binding methyltransferase superfamily. RsmB/NOP family.

Its subcellular location is the cytoplasm. The enzyme catalyses cytidine(1407) in 16S rRNA + S-adenosyl-L-methionine = 5-methylcytidine(1407) in 16S rRNA + S-adenosyl-L-homocysteine + H(+). Its function is as follows. Specifically methylates the cytosine at position 1407 (m5C1407) of 16S rRNA. The polypeptide is Ribosomal RNA small subunit methyltransferase F (Citrobacter koseri (strain ATCC BAA-895 / CDC 4225-83 / SGSC4696)).